The chain runs to 152 residues: 3-hydroxyacyl-[acyl-carrier-protein] dehydratase FabZ (152 aa).

The active site involves His58.

It belongs to the thioester dehydratase family. FabZ subfamily.

The protein localises to the cytoplasm. It carries out the reaction a (3R)-hydroxyacyl-[ACP] = a (2E)-enoyl-[ACP] + H2O. Functionally, involved in unsaturated fatty acids biosynthesis. Catalyzes the dehydration of short chain beta-hydroxyacyl-ACPs and long chain saturated and unsaturated beta-hydroxyacyl-ACPs. In Prochlorococcus marinus (strain MIT 9301), this protein is 3-hydroxyacyl-[acyl-carrier-protein] dehydratase FabZ.